Here is a 212-residue protein sequence, read N- to C-terminus: Imidazole glycerol phosphate synthase subunit HisH (212 aa).

Residues 3 to 212 (TVAVIDYGMG…QNFAAWDGRW (210 aa)) form the Glutamine amidotransferase type-1 domain. C81 acts as the Nucleophile in catalysis. Active-site residues include H190 and E192.

In terms of assembly, heterodimer of HisH and HisF.

Its subcellular location is the cytoplasm. The enzyme catalyses 5-[(5-phospho-1-deoxy-D-ribulos-1-ylimino)methylamino]-1-(5-phospho-beta-D-ribosyl)imidazole-4-carboxamide + L-glutamine = D-erythro-1-(imidazol-4-yl)glycerol 3-phosphate + 5-amino-1-(5-phospho-beta-D-ribosyl)imidazole-4-carboxamide + L-glutamate + H(+). It carries out the reaction L-glutamine + H2O = L-glutamate + NH4(+). Its pathway is amino-acid biosynthesis; L-histidine biosynthesis; L-histidine from 5-phospho-alpha-D-ribose 1-diphosphate: step 5/9. Functionally, IGPS catalyzes the conversion of PRFAR and glutamine to IGP, AICAR and glutamate. The HisH subunit catalyzes the hydrolysis of glutamine to glutamate and ammonia as part of the synthesis of IGP and AICAR. The resulting ammonia molecule is channeled to the active site of HisF. This is Imidazole glycerol phosphate synthase subunit HisH from Pseudomonas savastanoi pv. phaseolicola (strain 1448A / Race 6) (Pseudomonas syringae pv. phaseolicola (strain 1448A / Race 6)).